The sequence spans 341 residues: MIDERKRKILMAIVQDYISTAEPVGSRTIAKKYDLGISPATIRNEMADLEEMGYLEQPHTSAGRIPSVLGYRYYVDYLMEKPSLSREEEEFIRKVYEDKINSIGDLLEKTGKVLSSLTRYTAVVLSPEAGKVPLKHLQLVLLQPGKVLLIIVLEDGTLHHRAFEVPGDITAQDLEKVSAILNAKLYGVNPEKIRYSLIKEIYYELAQHQNLINITLELISNLNQDNQEHKIILGGLINLFNQPEFKNVEKVKTLLSILEQEEKIREIFSQLNVGVNVKIGSELNLKEIEDCSMIAAGYFSYGNSVGFIGVLGPTRMEYAKTVATVEFLSKYLSEIIGNKNF.

Belongs to the HrcA family.

Its function is as follows. Negative regulator of class I heat shock genes (grpE-dnaK-dnaJ and groELS operons). Prevents heat-shock induction of these operons. The sequence is that of Heat-inducible transcription repressor HrcA from Carboxydothermus hydrogenoformans (strain ATCC BAA-161 / DSM 6008 / Z-2901).